Here is a 466-residue protein sequence, read N- to C-terminus: Ribulose bisphosphate carboxylase large chain (466 aa).

Lys-4 bears the N6,N6,N6-trimethyllysine mark. The substrate site is built by Asn-113 and Thr-163. Lys-165 (proton acceptor) is an active-site residue. A substrate-binding site is contributed by Lys-167. Residues Lys-191, Asp-193, and Glu-194 each coordinate Mg(2+). N6-carboxylysine is present on Lys-191. The active-site Proton acceptor is the His-284. Substrate-binding residues include Arg-285, His-317, and Ser-369.

Belongs to the RuBisCO large chain family. Type I subfamily. In terms of assembly, heterohexadecamer of 8 large chains and 8 small chains; disulfide-linked. The disulfide link is formed within the large subunit homodimers. It depends on Mg(2+) as a cofactor. The disulfide bond which can form in the large chain dimeric partners within the hexadecamer appears to be associated with oxidative stress and protein turnover.

It localises to the plastid. It is found in the chloroplast. The catalysed reaction is 2 (2R)-3-phosphoglycerate + 2 H(+) = D-ribulose 1,5-bisphosphate + CO2 + H2O. It catalyses the reaction D-ribulose 1,5-bisphosphate + O2 = 2-phosphoglycolate + (2R)-3-phosphoglycerate + 2 H(+). Functionally, ruBisCO catalyzes two reactions: the carboxylation of D-ribulose 1,5-bisphosphate, the primary event in carbon dioxide fixation, as well as the oxidative fragmentation of the pentose substrate in the photorespiration process. Both reactions occur simultaneously and in competition at the same active site. The protein is Ribulose bisphosphate carboxylase large chain of Aphelandra sinclairiana (Orange shrimp plant).